Consider the following 202-residue polypeptide: Large ribosomal subunit protein uL4 (202 aa).

Positions glycine 42–valine 52 are enriched in polar residues. Residues glycine 42–glycine 70 form a disordered region.

It belongs to the universal ribosomal protein uL4 family. In terms of assembly, part of the 50S ribosomal subunit.

One of the primary rRNA binding proteins, this protein initially binds near the 5'-end of the 23S rRNA. It is important during the early stages of 50S assembly. It makes multiple contacts with different domains of the 23S rRNA in the assembled 50S subunit and ribosome. Functionally, forms part of the polypeptide exit tunnel. The sequence is that of Large ribosomal subunit protein uL4 from Xylella fastidiosa (strain 9a5c).